The sequence spans 209 residues: Thiamine-phosphate synthase (209 aa).

4-amino-2-methyl-5-(diphosphooxymethyl)pyrimidine contacts are provided by residues 35-39 (QYRDK) and Asn-67. Residues Asp-68 and Asp-86 each contribute to the Mg(2+) site. Thr-105 contributes to the 4-amino-2-methyl-5-(diphosphooxymethyl)pyrimidine binding site. 132-134 (SNT) serves as a coordination point for 2-[(2R,5Z)-2-carboxy-4-methylthiazol-5(2H)-ylidene]ethyl phosphate. A 4-amino-2-methyl-5-(diphosphooxymethyl)pyrimidine-binding site is contributed by Lys-135. Gly-162 is a 2-[(2R,5Z)-2-carboxy-4-methylthiazol-5(2H)-ylidene]ethyl phosphate binding site.

This sequence belongs to the thiamine-phosphate synthase family. It depends on Mg(2+) as a cofactor.

The enzyme catalyses 2-[(2R,5Z)-2-carboxy-4-methylthiazol-5(2H)-ylidene]ethyl phosphate + 4-amino-2-methyl-5-(diphosphooxymethyl)pyrimidine + 2 H(+) = thiamine phosphate + CO2 + diphosphate. It carries out the reaction 2-(2-carboxy-4-methylthiazol-5-yl)ethyl phosphate + 4-amino-2-methyl-5-(diphosphooxymethyl)pyrimidine + 2 H(+) = thiamine phosphate + CO2 + diphosphate. The catalysed reaction is 4-methyl-5-(2-phosphooxyethyl)-thiazole + 4-amino-2-methyl-5-(diphosphooxymethyl)pyrimidine + H(+) = thiamine phosphate + diphosphate. It participates in cofactor biosynthesis; thiamine diphosphate biosynthesis; thiamine phosphate from 4-amino-2-methyl-5-diphosphomethylpyrimidine and 4-methyl-5-(2-phosphoethyl)-thiazole: step 1/1. Functionally, condenses 4-methyl-5-(beta-hydroxyethyl)thiazole monophosphate (THZ-P) and 2-methyl-4-amino-5-hydroxymethyl pyrimidine pyrophosphate (HMP-PP) to form thiamine monophosphate (TMP). The chain is Thiamine-phosphate synthase from Pseudomonas fluorescens (strain SBW25).